The primary structure comprises 1214 residues: Neuronal cell adhesion molecule (1214 aa).

An N-terminal signal peptide occupies residues 1 to 29 (MQLKTMPKKKPLSAGRAPLFLFLCQMISA). Over 30 to 1077 (LDVPLDPKLL…ASRQVDIATQ (1048 aa)) the chain is Extracellular. 2 Ig-like C2-type domains span residues 46-134 (PTIT…AAVS) and 141-235 (PSRS…QPIS). Intrachain disulfides connect C68-C123 and C167-C218. N83 is a glycosylation site (N-linked (GlcNAc...) asparagine). N223, N245, N251, N276, N314, and N377 each carry an N-linked (GlcNAc...) asparagine glycan. Ig-like C2-type domains follow at residues 267-356 (PPTF…ISVT), 361-448 (PYWI…AFVN), 454-541 (PRIL…VHLE), and 545-626 (PTRF…DSVS). A disulfide bridge connects residues C292 and C340. C382 and C432 are joined by a disulfide. N-linked (GlcNAc...) asparagine glycosylation is found at N433 and N507. Intrachain disulfides connect C476/C525 and C567/C616. N-linked (GlcNAc...) asparagine glycosylation is found at N619, N716, N802, N858, N993, N1009, and N1019. Fibronectin type-III domains are found at residues 649 to 744 (PPFD…TKAA), 746 to 843 (PDQN…SGED), 848 to 950 (APGN…TPEG), and 954 to 1051 (APSS…VDEG). A helical membrane pass occupies residues 1078–1100 (GWFIGLMCAVALLILILLIVCFI). At 1101 to 1214 (RRNKGGKYPV…SPVNAMNSFV (114 aa)) the chain is on the cytoplasmic side. Residues 1109-1129 (PVKEKEDAHADPEIQPMKEDD) are compositionally biased toward basic and acidic residues. The tract at residues 1109-1214 (PVKEKEDAHA…SPVNAMNSFV (106 aa)) is disordered. T1131 is subject to Phosphothreonine. Y1135 carries the phosphotyrosine modification. S1136 is subject to Phosphoserine. Basic and acidic residues predominate over residues 1151-1160 (PSDRTVKKED). Phosphoserine is present on residues S1161, S1164, S1181, S1200, S1201, and S1205. Over residues 1198–1214 (NESSEAPSPVNAMNSFV) the composition is skewed to polar residues.

The protein belongs to the immunoglobulin superfamily. L1/neurofascin/NgCAM family. As to quaternary structure, constituent of a NFASC/NRCAM/ankyrin-G complex. Detected in a complex with CNTN1 and PTPRB. Interacts with MYOC. Interacts with GLDN. As to expression, detected in cerebellum Purkinje cells. Detected on nodes of Ranvier and unmyelinated axons in sciatic nerve (at protein level).

The protein resides in the cell membrane. It is found in the cell projection. It localises to the axon. The protein localises to the secreted. In terms of biological role, cell adhesion protein that is required for normal responses to cell-cell contacts in brain and in the peripheral nervous system. Plays a role in neurite outgrowth in response to contactin binding. Plays a role in mediating cell-cell contacts between Schwann cells and axons. Plays a role in the formation and maintenance of the nodes of Ranvier on myelinated axons. Nodes of Ranvier contain clustered sodium channels that are crucial for the saltatory propagation of action potentials along myelinated axons. During development, nodes of Ranvier are formed by the fusion of two heminodes. Required for normal clustering of sodium channels at heminodes; not required for the formation of mature nodes with normal sodium channel clusters. Required, together with GLDN, for maintaining NFASC and sodium channel clusters at mature nodes of Ranvier. The sequence is that of Neuronal cell adhesion molecule (Nrcam) from Rattus norvegicus (Rat).